The primary structure comprises 324 residues: Probable UDP-sugar transporter protein SLC35A4 (324 aa).

At 1–18 (MSVEDGGLPGLGGPGQAR) the chain is on the cytoplasmic side. Residues 19-39 (WTLMLLLSTATYGAHAPLLAL) form a helical membrane-spanning segment. The Lumenal segment spans residues 40-52 (CHVDGRVPFRPSS). The chain crosses the membrane as a helical span at residues 53–73 (AVLLTELTKLLLCALSLLVGW). Residues 74–85 (QAWPPRTPPWRQ) lie on the Cytoplasmic side of the membrane. Residues 86 to 106 (AAPFALSALLYGANNNLVIHL) traverse the membrane as a helical segment. Topologically, residues 107 to 140 (QHYMDPSTYQVLSNLKIGSTALFYCLCLRRRLSA) are lumenal. Residues 141 to 161 (RQGLALLLLMAAGACYAAGGL) traverse the membrane as a helical segment. Residues 162 to 177 (RDPGSPLPESPSTAAS) are Cytoplasmic-facing. The helical transmembrane segment at 178–198 (GPVPLHVTAPGLLLLLLYCLI) threads the bilayer. At 199–214 (SGLSSVYTELLLKRQR) the chain is on the lumenal side. A helical membrane pass occupies residues 215–235 (LPLALQNLFLYTFGVLLNLGL). Residues 236-248 (HAGGGPGPGLLEG) lie on the Cytoplasmic side of the membrane. The chain crosses the membrane as a helical span at residues 249 to 271 (FSGWAALVVLSQALNGLLMSAVM). Topologically, residues 272 to 279 (KHGSSITR) are lumenal. The helical transmembrane segment at 280 to 300 (LFVVSCSLVVNAVLSAALLRL) threads the bilayer. The Cytoplasmic segment spans residues 301-324 (QLTAAFFLAALLIGLAVHLYYGSR).

Belongs to the nucleotide-sugar transporter family. SLC35A subfamily. As to quaternary structure, found in a complex with SLC35A2 and SLC35A3.

It localises to the golgi apparatus membrane. It carries out the reaction CDP-L-ribitol(in) + CDP(out) = CDP-L-ribitol(out) + CDP(in). Its function is as follows. Mediates the transport of CDP-ribitol. Does not exhibit CMP-sialic acid, UDP-galactose and UDP-N-acetylglucosamine transport activity. In Sus scrofa (Pig), this protein is Probable UDP-sugar transporter protein SLC35A4.